The following is a 264-amino-acid chain: Thymidylate synthase (264 aa).

Arg21 is a binding site for dUMP. Residue His51 coordinates (6R)-5,10-methylene-5,6,7,8-tetrahydrofolate. A dUMP-binding site is contributed by 126 to 127 (RR). The active-site Nucleophile is the Cys146. DUMP-binding positions include 166 to 169 (RSAD), Asn177, and 207 to 209 (HIY). Residue Asp169 participates in (6R)-5,10-methylene-5,6,7,8-tetrahydrofolate binding. Position 263 (Ala263) interacts with (6R)-5,10-methylene-5,6,7,8-tetrahydrofolate.

This sequence belongs to the thymidylate synthase family. Bacterial-type ThyA subfamily. Homodimer.

Its subcellular location is the cytoplasm. It catalyses the reaction dUMP + (6R)-5,10-methylene-5,6,7,8-tetrahydrofolate = 7,8-dihydrofolate + dTMP. It participates in pyrimidine metabolism; dTTP biosynthesis. Its function is as follows. Catalyzes the reductive methylation of 2'-deoxyuridine-5'-monophosphate (dUMP) to 2'-deoxythymidine-5'-monophosphate (dTMP) while utilizing 5,10-methylenetetrahydrofolate (mTHF) as the methyl donor and reductant in the reaction, yielding dihydrofolate (DHF) as a by-product. This enzymatic reaction provides an intracellular de novo source of dTMP, an essential precursor for DNA biosynthesis. The sequence is that of Thymidylate synthase from Methylobacillus flagellatus (strain ATCC 51484 / DSM 6875 / VKM B-1610 / KT).